The primary structure comprises 1347 residues: MAPSRKRGGGRAAAASSARREWKVGDLVLAKVKGFPAWPAVVDEPEKWGHSADSKKVTVHFFGTQQIAFCNHGDVESFTEEKKQSLLTRRHAKGSDFVRAVKEITESYEKLKQQDQASGPKYAEETTAGSSGNTSQLPQACENLIGSRLDTQIESSSSHGRDELTLLSEDASAAEQMLALRHNTLAHNGACDSAAAKDLCEIATYSSRRRNERVRALKYAPQSIILPVEHSKISSRLELDRVQRSMLQCSDGGPSVNSINGKAIRRRKRIRTSGQSESDDVVSSDLNLHGSDEDNASEIATVESNNNSRNEGNGVDSGSKVEYSDAVGEGCDGGHELNKGLDFHISTMVKRKKRKPTRKRETSDIIDPPAKVEAEGLGPNACDSCQRSQNSHERLNERPCEENGDEHLPLVKRARVRMSRAFYADEKVNASSQVEERSSKDTLLSAALQTSPSVNHENGIGSGHDTSAAEEFNSFELSAKLSGVMVDVVPSHMEKPSDRMSPSVACVQTVGDRQTAVNFHENEFTMTLDDEVTRAQSNQLSSLVETEARVPEVVQGCSEESQTGNCLISETDPIDIQCSHQSEKHETPLNPDIVDSSANKSPGLCSSLDMTTTVVPAQSPHQHKIQEYDSSDHSLVIVGDSLNGKCEKIDYCMTQVVQSQALEPPPPLFCSVVNYQEVENLQETENTLWKENQGSPGKELDSDKQAHMIQNPVLSATESEMIVDDAEPQYETVYSHCADAVENRELEKSCEVDEQKEQMQATNSISVSENFSREKLNSSPARGTPNCNSVCRISTAESENAMQNNSYYSTNVQYGENKSLNVDTVKEESKVETGTTQVKKVVSSDVQCTVESFETALDSLVRTKETIGRATRLAMDLAKFGVSAKAMEILAHTLESESNLQRRVDLFFLVDSIAQCSKGLNGDAGGVYLSSIQAMLPRLLTAAVPAGATTQENRKQCLKVLRLWLERRILPESIVRHHIRELDSLSNVPACLYSRRSARTERALDDPVRDMEGILVDEYGSNSTLQLHGFCIPPILRDEDEGSDSDGGDFESVTPEHESRSLEEHVTPSITERHTRILEDVDGELEMEDVAPPWEGGSSASAITDQADNRESANCLLVPGTSHQNVTSSSPPARPSQNAQLAMSNSYSNGFDYRRNPSMQGDYHAGPPRMNPPMHYGSPEPSYSSRVSLSKSMPRGEGSNFQHRPYPSSHPPPPPPSHHYSYMEPDHHIKSRREGLSYPHRSHYTLEFDERNYQDSYERMRPEPCENRDNWRYHPPSSHGPRYHDRHKGPHQSSSYSGHHRDSGRLQNNRWSDSPRAYNNRHSYHYKQHSEGPVPVGMRDPGTWHQR.

One can recognise a PWWP domain in the interval valine 24–glutamate 81. Disordered regions lie at residues lysine 110 to leucine 137, aspartate 251 to lysine 320, and aspartate 383 to glutamate 402. Over residues threonine 127–leucine 137 the composition is skewed to polar residues. The segment covering valine 302–glycine 314 has biased composition (low complexity). Positions asparagine 390–glutamate 402 are enriched in basic and acidic residues. The CID domain occupies aspartate 845–serine 986. 4 disordered regions span residues arginine 1037–serine 1069, threonine 1121–glutamine 1140, tyrosine 1147–methionine 1223, and arginine 1259–arginine 1347. The span at aspartate 1038–aspartate 1049 shows a compositional bias: acidic residues. Residues threonine 1054–serine 1069 are compositionally biased toward basic and acidic residues. Positions proline 1181–lysine 1191 are enriched in polar residues. Residues serine 1208–serine 1217 show a composition bias toward pro residues. The segment covering arginine 1259–arginine 1272 has biased composition (basic and acidic residues).

In terms of tissue distribution, expressed throughout young primordia, and vegetative and reproductive apices.

The protein localises to the nucleus. Probable transcription factor that acts with partial redundancy with HULK1 and HULK2. Plays diverse and essential roles in the control of plant development, physiology and flowering time. This is Protein HUA2-LIKE 3 from Arabidopsis thaliana (Mouse-ear cress).